Consider the following 1405-residue polypeptide: DNA-directed RNA polymerase subunit beta' (1405 aa).

Residues Cys70, Cys72, Cys85, and Cys88 each coordinate Zn(2+). Mg(2+) contacts are provided by Asp460, Asp462, and Asp464. Positions 814, 888, 895, and 898 each coordinate Zn(2+).

The protein belongs to the RNA polymerase beta' chain family. In terms of assembly, the RNAP catalytic core consists of 2 alpha, 1 beta, 1 beta' and 1 omega subunit. When a sigma factor is associated with the core the holoenzyme is formed, which can initiate transcription. The cofactor is Mg(2+). Requires Zn(2+) as cofactor.

It carries out the reaction RNA(n) + a ribonucleoside 5'-triphosphate = RNA(n+1) + diphosphate. Functionally, DNA-dependent RNA polymerase catalyzes the transcription of DNA into RNA using the four ribonucleoside triphosphates as substrates. This chain is DNA-directed RNA polymerase subunit beta', found in Wigglesworthia glossinidia brevipalpis.